The primary structure comprises 186 residues: MASPTKAVIVPGNGGGDVATHGWYGWVRKGLEQIPGFQCLAKNMPDPITARESIWLPFMETELHCDEKTIIIGHSSGAIAAMRYAETHQVYALILVSAYTSDLGDENERASGYFSRPWQWEKIKANCPHIIQFGSTDDPFLPWKEQQEVADRLDAKLYKFTDRGHFQNTEFHELIRVVKSMLTPAL.

The tract at residues 63 to 67 is involved in binding to RB1; the sequence is LHCDE. Catalysis depends on charge relay system residues Ser-75, Asp-138, and His-165.

This sequence belongs to the RBBP9 family. As to quaternary structure, interacts with RB1; the interaction disrupts RB1 binding to E2F1. Interacts with RBL1 and RBL2. In terms of tissue distribution, highly expressed in the spleen, testis and kidney. Also found in the heart, liver, lung and brain.

The enzyme catalyses valacyclovir + H2O = acyclovir + L-valine + H(+). Its function is as follows. Serine hydrolase. Catalyzes the hydrolytic activation of amino acid ester of the antiviral prodrug valacyclovir to its corresponding active drug, acyclovir. May negatively regulate basal or autocrine TGF-beta signaling by suppressing SMAD2-SMAD3 phosphorylation. May play a role in the transformation process due to its capacity to confer resistance to the growth-inhibitory effects of TGF-beta through interaction with RB1 and the subsequent displacement of E2F1. This chain is Serine hydrolase RBBP9, found in Rattus norvegicus (Rat).